A 346-amino-acid polypeptide reads, in one-letter code: Aspartate-semialdehyde dehydrogenase (346 aa).

Residues 12 to 15 and 40 to 41 each bind NADP(+); these read SGAV and RS. Residue Arg-101 coordinates phosphate. Catalysis depends on Cys-131, which acts as the Acyl-thioester intermediate. A substrate-binding site is contributed by Gln-158. Position 161 to 162 (161 to 162) interacts with NADP(+); sequence SG. Phosphate is bound at residue Lys-225. A substrate-binding site is contributed by Arg-246. His-253 serves as the catalytic Proton acceptor. An NADP(+)-binding site is contributed by Gln-326.

This sequence belongs to the aspartate-semialdehyde dehydrogenase family. Homodimer.

The catalysed reaction is L-aspartate 4-semialdehyde + phosphate + NADP(+) = 4-phospho-L-aspartate + NADPH + H(+). It functions in the pathway amino-acid biosynthesis; L-lysine biosynthesis via DAP pathway; (S)-tetrahydrodipicolinate from L-aspartate: step 2/4. The protein operates within amino-acid biosynthesis; L-methionine biosynthesis via de novo pathway; L-homoserine from L-aspartate: step 2/3. It participates in amino-acid biosynthesis; L-threonine biosynthesis; L-threonine from L-aspartate: step 2/5. Functionally, catalyzes the NADPH-dependent formation of L-aspartate-semialdehyde (L-ASA) by the reductive dephosphorylation of L-aspartyl-4-phosphate. In Helicobacter pylori (strain J99 / ATCC 700824) (Campylobacter pylori J99), this protein is Aspartate-semialdehyde dehydrogenase.